The primary structure comprises 317 residues: UV DNA damage endonuclease (317 aa).

The protein belongs to the uve1/UvsE family.

Functionally, component in a DNA repair pathway. Removal of UV LIGHT damaged nucleotides. Recognizes pyrimidine dimers and cleave a phosphodiester bond immediately 5' to the lesion. This is UV DNA damage endonuclease from Bacillus cereus (strain G9842).